We begin with the raw amino-acid sequence, 702 residues long: Protein-glucosylgalactosylhydroxylysine glucosidase (702 aa).

Residue 310–311 participates in substrate binding; that stretch reads WD. Catalysis depends on E440, which acts as the Proton donor. 508–509 is a substrate binding site; the sequence is KQ.

This sequence belongs to the glycosyl hydrolase 65 family.

It carries out the reaction (5R)-5-O-[alpha-D-glucosyl-(1-&gt;2)-beta-D-galactosyl]-5-hydroxy-L-lysyl-[collagen] + H2O = (5R)-5-O-(beta-D-galactosyl)-5-hydroxy-L-lysyl-[collagen] + D-glucose. In terms of biological role, catalyzes the hydrolysis of glucose from the disaccharide unit linked to hydroxylysine residues of collagen and collagen-like proteins. This Gallus gallus (Chicken) protein is Protein-glucosylgalactosylhydroxylysine glucosidase.